The sequence spans 394 residues: 1-deoxy-D-xylulose 5-phosphate reductoisomerase (394 aa).

NADPH is bound by residues T10, G11, S12, I13, G38, R39, N40, and N123. K124 serves as a coordination point for 1-deoxy-D-xylulose 5-phosphate. E125 provides a ligand contact to NADPH. D149 serves as a coordination point for Mn(2+). Positions 150, 151, 175, and 198 each coordinate 1-deoxy-D-xylulose 5-phosphate. Mn(2+) is bound at residue E151. G204 is a binding site for NADPH. S211, N216, K217, and E220 together coordinate 1-deoxy-D-xylulose 5-phosphate. E220 is a Mn(2+) binding site.

It belongs to the DXR family. Mg(2+) is required as a cofactor. It depends on Mn(2+) as a cofactor.

It catalyses the reaction 2-C-methyl-D-erythritol 4-phosphate + NADP(+) = 1-deoxy-D-xylulose 5-phosphate + NADPH + H(+). It participates in isoprenoid biosynthesis; isopentenyl diphosphate biosynthesis via DXP pathway; isopentenyl diphosphate from 1-deoxy-D-xylulose 5-phosphate: step 1/6. Its function is as follows. Catalyzes the NADPH-dependent rearrangement and reduction of 1-deoxy-D-xylulose-5-phosphate (DXP) to 2-C-methyl-D-erythritol 4-phosphate (MEP). This is 1-deoxy-D-xylulose 5-phosphate reductoisomerase from Cereibacter sphaeroides (strain ATCC 17029 / ATH 2.4.9) (Rhodobacter sphaeroides).